Consider the following 371-residue polypeptide: Cytochrome b (371 aa).

4 consecutive transmembrane segments (helical) span residues 25–45 (FGSM…FLAI), 69–90 (WIMQ…YIHI), 105–125 (WLSG…GYVL), and 170–190 (FFAL…IHII). Histidine 75 and histidine 89 together coordinate heme b. Heme b contacts are provided by histidine 174 and histidine 188. Histidine 193 is a binding site for a ubiquinone. 4 helical membrane passes run 218–238 (YKDL…LSFS), 280–300 (LGGT…PFTH), 312–332 (LSQT…WTAT), and 339–358 (FITI…IMNP).

The protein belongs to the cytochrome b family. In terms of assembly, the cytochrome bc1 complex contains 3 respiratory subunits (MT-CYB, CYC1 and UQCRFS1), 2 core proteins (UQCRC1 and UQCRC2) and probably 6 low-molecular weight proteins. Heme b serves as cofactor.

Its subcellular location is the mitochondrion inner membrane. Its function is as follows. Component of the ubiquinol-cytochrome c reductase complex (complex III or cytochrome b-c1 complex) that is part of the mitochondrial respiratory chain. The b-c1 complex mediates electron transfer from ubiquinol to cytochrome c. Contributes to the generation of a proton gradient across the mitochondrial membrane that is then used for ATP synthesis. In Micrurus fulvius (Eastern coral snake), this protein is Cytochrome b (MT-CYB).